The chain runs to 161 residues: Nucleotide-binding protein Bmul_0741/BMULJ_02519 (161 aa).

This sequence belongs to the YajQ family.

Its function is as follows. Nucleotide-binding protein. The chain is Nucleotide-binding protein Bmul_0741/BMULJ_02519 from Burkholderia multivorans (strain ATCC 17616 / 249).